A 148-amino-acid chain; its full sequence is Receptor activity-modifying protein 1 (148 aa).

The first 26 residues, 1–26 (MAPGLRGLPRRGLWLLLAHHLFMVTA), serve as a signal peptide directing secretion. 3 cysteine pairs are disulfide-bonded: C27-C82, C40-C72, and C57-C104. Over 27 to 118 (CRDPDYGTLI…RALRDPPNSI (92 aa)) the chain is Extracellular. The chain crosses the membrane as a helical span at residues 119 to 140 (LCPFIVLPITVTLLMTALVVWR). Residues 141-148 (SKRTEGIV) lie on the Cytoplasmic side of the membrane.

It belongs to the RAMP family. Heterodimer of CALCRL and RAMP1; the interaction induces allosteric modulation of CALCRL function and CGRP1/CALCA and CGRP2/CALCB ligand specificity. Heterodimer of CALCR and RAMP1; interaction forms the AMYR1 receptor complex for amylin/IAPP and CGRP1/CALCA ligands.

It localises to the cell membrane. Its function is as follows. Accessory protein that interacts with and modulates the function of G-protein coupled receptors including calcitonin gene-related peptide type 1 receptor (CALCRL) and calcitonin receptor (CALCR). Required for the transport of CALCRL to the plasma membrane. Together with CALCRL, form the receptor complex for the calcitonin gene-related peptides CGRP1/CALCA and CGRP2/CALCB. Together with CALCR, form the AMYR1 receptor complex for amylin/IAPP and CGRP1/CALCA. The protein is Receptor activity-modifying protein 1 of Rattus norvegicus (Rat).